The following is a 115-amino-acid chain: Large ribosomal subunit protein uL18 (115 aa).

Residues 1–20 (MKYTKQEARKRRHYRVRSKV) are disordered. Basic residues predominate over residues 8–18 (ARKRRHYRVRS).

The protein belongs to the universal ribosomal protein uL18 family. In terms of assembly, part of the 50S ribosomal subunit; part of the 5S rRNA/L5/L18/L25 subcomplex. Contacts the 5S and 23S rRNAs.

In terms of biological role, this is one of the proteins that bind and probably mediate the attachment of the 5S RNA into the large ribosomal subunit, where it forms part of the central protuberance. This is Large ribosomal subunit protein uL18 from Mesoplasma florum (strain ATCC 33453 / NBRC 100688 / NCTC 11704 / L1) (Acholeplasma florum).